A 499-amino-acid polypeptide reads, in one-letter code: Thermostable carboxypeptidase 1 (499 aa).

In terms of domain architecture, Peptidase M32 spans 6–499; it reads QNETIKQILA…FVRWVKEKYL (494 aa). The HPF motif lies at 238–240; sequence HPF. The DXRXT motif lies at 248 to 252; that stretch reads DVRIT. His-269 contacts Co(2+). Residues 269–273 carry the HEXXH motif; it reads HEFGH. Glu-270 acts as the Proton donor/acceptor in catalysis. The Co(2+) site is built by His-273 and Glu-299. The HES/GQ signature appears at 298–301; sequence HESQ. The I/NRXXA/SD signature appears at 350–355; the sequence is IRTEAD. The GXXQDXHW motif lies at 405 to 412; it reads GILQDIHW.

It belongs to the peptidase M32 family. Homodimer. Co(2+) serves as cofactor. The cofactor is Mn(2+).

The catalysed reaction is Release of a C-terminal amino acid with broad specificity, except for -Pro.. Its activity is regulated as follows. EDTA and DTT reversibly abolish carboxypeptidase activity. Broad specificity carboxypetidase that releases amino acids sequentially from the C-terminus, including neutral, aromatic, polar and basic residues, but not Pro, Gly, Asp and Glu. The protein is Thermostable carboxypeptidase 1 of Pyrococcus furiosus (strain ATCC 43587 / DSM 3638 / JCM 8422 / Vc1).